A 428-amino-acid polypeptide reads, in one-letter code: Enolase (428 aa).

Residue glutamine 173 coordinates (2R)-2-phosphoglycerate. Residue glutamate 217 is the Proton donor of the active site. Aspartate 253, glutamate 294, and aspartate 320 together coordinate Mg(2+). The (2R)-2-phosphoglycerate site is built by lysine 345, arginine 374, serine 375, and lysine 396. The active-site Proton acceptor is the lysine 345.

It belongs to the enolase family. The cofactor is Mg(2+).

The protein localises to the cytoplasm. It localises to the secreted. Its subcellular location is the cell surface. It catalyses the reaction (2R)-2-phosphoglycerate = phosphoenolpyruvate + H2O. It functions in the pathway carbohydrate degradation; glycolysis; pyruvate from D-glyceraldehyde 3-phosphate: step 4/5. Catalyzes the reversible conversion of 2-phosphoglycerate (2-PG) into phosphoenolpyruvate (PEP). It is essential for the degradation of carbohydrates via glycolysis. In Methanosarcina barkeri (strain Fusaro / DSM 804), this protein is Enolase.